Here is a 606-residue protein sequence, read N- to C-terminus: Leucine-rich repeat and immunoglobulin-like domain-containing nogo receptor-interacting protein 1 (606 aa).

Positions 1–27 (MILQLPSCLCPILLIVVGSILSGSASG) are cleaved as a signal peptide. Disulfide bonds link cysteine 28-cysteine 34 and cysteine 32-cysteine 43. The LRRNT domain occupies 28-57 (CPQRCDCSPQDRSVLCHRKRYLDVPEGIPT). Residues 28–547 (CPQRCDCSPQ…FDIKTLIIAT (520 aa)) are Extracellular-facing. LRR repeat units lie at residues 58 to 79 (DTRLLDLSKNRIKALNQDEFSA), 82 to 103 (YLEELELNENIVSIIEPGAFNG), 106 to 127 (NLRSLGLRSNRLKLIPLGVFTG), 130 to 151 (NLTQLDISENKIVILLDDMFQD), 154 to 175 (NLKSLEVGDNDLVYISHRAFRG), 178 to 199 (SLEELTLEKCNLTSVPTEALSH), 202 to 223 (GLITLKLRYLNINVIRDYSFKR), 250 to 271 (NLTSLSITHSNLSSIPYVAIRH), 274 to 295 (YLRFLNLSYNPITAVEGSMLYE), 298 to 319 (RLQEFHLVGGQLSVVEPYAFRG), and 322 to 343 (HLKVLNVSSNYLSTLEESSFHS). A glycan (N-linked (GlcNAc...) asparagine) is linked at asparagine 130. A glycan (N-linked (GlcNAc...) asparagine) is linked at asparagine 188. N-linked (GlcNAc...) asparagine glycans are attached at residues asparagine 250, asparagine 260, and asparagine 279. Residues asparagine 327, asparagine 374, asparagine 478, asparagine 491, asparagine 512, asparagine 523, and asparagine 528 are each glycosylated (N-linked (GlcNAc...) asparagine). The region spanning 355–409 (NPLACDCRLLWIFRRRWRLNFSRQQPSCSSPEYVQGKEFKDFPDVLQPNYFTCRR) is the LRRCT domain. 3 disulfide bridges follow: cysteine 359-cysteine 382, cysteine 361-cysteine 407, and cysteine 432-cysteine 483. In terms of domain architecture, Ig-like C2-type spans 397–496 (PDVLQPNYFT…NAGGNDTSLA (100 aa)). The helical transmembrane segment at 548-568 (TMGFISFLGVVLFCLVLLFLW) threads the bilayer. Residues 569 to 606 (SRGKGNTKHNIEIEYVPRKSDAGLSSADAPRKFNMKMI) are Cytoplasmic-facing.

The protein localises to the cell membrane. May play a role in regulating axonal regeneration and plasticity in the adult central nervous system. The sequence is that of Leucine-rich repeat and immunoglobulin-like domain-containing nogo receptor-interacting protein 1 (lingo1) from Xenopus tropicalis (Western clawed frog).